A 398-amino-acid chain; its full sequence is Enoyl-[acyl-carrier-protein] reductase [NADH] (398 aa).

Residues 48–53, 74–75, 111–112, and 139–140 each bind NAD(+); these read GASTGY, FE, DG, and LA. Y225 lines the substrate pocket. Residue Y235 is the Proton donor of the active site. Residues K244 and 273-275 each bind NAD(+); that span reads VVT.

This sequence belongs to the TER reductase family. In terms of assembly, monomer.

The catalysed reaction is a 2,3-saturated acyl-[ACP] + NAD(+) = a (2E)-enoyl-[ACP] + NADH + H(+). It participates in lipid metabolism; fatty acid biosynthesis. Involved in the final reduction of the elongation cycle of fatty acid synthesis (FAS II). Catalyzes the reduction of a carbon-carbon double bond in an enoyl moiety that is covalently linked to an acyl carrier protein (ACP). The polypeptide is Enoyl-[acyl-carrier-protein] reductase [NADH] (Variovorax paradoxus (strain S110)).